Consider the following 323-residue polypeptide: Polycomb complex protein BMI-1-B (323 aa).

An RING-type zinc finger spans residues 18–57 (CVLCGGYFIDAATIIECLHSFCKTCIVRYLETSKYCPICD). Positions 81-95 (KLVPGLFKGEMKRRR) match the Nuclear localization signal motif. Residues 238–310 (PHTDRINNTS…HQNPFANRAR (73 aa)) are disordered. Residues 287 to 301 (HISSTINGTNSSSSH) are compositionally biased toward low complexity.

Component of a PRC1-like complex. Interacts with cbx4.

It localises to the nucleus. Functionally, component of a Polycomb group (PcG) multiprotein PRC1-like complex, a complex class required to maintain the transcriptionally repressive state of many genes, including Hox genes, throughout development. PcG PRC1 complex acts via chromatin remodeling and modification of histones; it mediates monoubiquitination of histone H2A 'Lys-119', rendering chromatin heritably changed in its expressibility. In the PRC1 complex, it is required to stimulate the E3 ubiquitin-protein ligase activity of rnf2. In Xenopus laevis (African clawed frog), this protein is Polycomb complex protein BMI-1-B (bmi1b).